The primary structure comprises 549 residues: O-fucosyltransferase 29 (549 aa).

The helical; Signal-anchor for type II membrane protein transmembrane segment at 43–63 (TVMWTWVCGFMLFSLGVISLF) threads the bilayer. A glycan (N-linked (GlcNAc...) asparagine) is linked at Asn152. Residue 292-294 (HLR) coordinates substrate. Residues Asn359 and Asn527 are each glycosylated (N-linked (GlcNAc...) asparagine). The disordered stretch occupies residues 506–549 (PFSYDKTSTDDEEEDMSEENHNSTSPGHVHLSSADNERDEVFPD). The span at 540–549 (DNERDEVFPD) shows a compositional bias: basic and acidic residues.

This sequence belongs to the glycosyltransferase GT106 family.

It is found in the membrane. It participates in glycan metabolism. The sequence is that of O-fucosyltransferase 29 from Arabidopsis thaliana (Mouse-ear cress).